Here is a 503-residue protein sequence, read N- to C-terminus: Probable cytosol aminopeptidase (503 aa).

Positions 274 and 279 each coordinate Mn(2+). The active site involves K286. Residues D297, D356, and E358 each coordinate Mn(2+). R360 is an active-site residue.

Belongs to the peptidase M17 family. It depends on Mn(2+) as a cofactor.

It localises to the cytoplasm. The enzyme catalyses Release of an N-terminal amino acid, Xaa-|-Yaa-, in which Xaa is preferably Leu, but may be other amino acids including Pro although not Arg or Lys, and Yaa may be Pro. Amino acid amides and methyl esters are also readily hydrolyzed, but rates on arylamides are exceedingly low.. The catalysed reaction is Release of an N-terminal amino acid, preferentially leucine, but not glutamic or aspartic acids.. In terms of biological role, presumably involved in the processing and regular turnover of intracellular proteins. Catalyzes the removal of unsubstituted N-terminal amino acids from various peptides. This Burkholderia mallei (strain SAVP1) protein is Probable cytosol aminopeptidase.